The primary structure comprises 102 residues: Large ribosomal subunit protein uL24 (102 aa).

It belongs to the universal ribosomal protein uL24 family. Part of the 50S ribosomal subunit.

One of two assembly initiator proteins, it binds directly to the 5'-end of the 23S rRNA, where it nucleates assembly of the 50S subunit. Functionally, one of the proteins that surrounds the polypeptide exit tunnel on the outside of the subunit. The polypeptide is Large ribosomal subunit protein uL24 (Rhizobium etli (strain CIAT 652)).